We begin with the raw amino-acid sequence, 2038 residues long: Homeotic protein female sterile (2038 aa).

The Bromo 1 domain occupies 34–140 (RNTNQLQYLI…KVFLQKIESM (107 aa)). The interval 145–284 (LELEPVTAKG…TTAMAGGVGG (140 aa)) is disordered. Low complexity-rich tracts occupy residues 177-209 (GSGTSSAAVTSGPGSGSTKVSVAASSAQQSGLQ) and 268-279 (PGSTNTTTTAMA). Residues 330–350 (AAVAAAAAAAAAAAAAAGGAA) traverse the membrane as a helical segment. The segment at 396-432 (KGVKRKADTTTPTANAFESPYTQMDSKSAKIATRRES) is disordered. Positions 404 to 421 (TTTPTANAFESPYTQMDS) are enriched in polar residues. The chain crosses the membrane as a helical span at residues 451–471 (VSGVPGLGGLVAGGVAGVAVA). Ser452 is subject to Phosphoserine. Positions 475 to 584 (EKLSDALKSC…DVFEMRYANI (110 aa)) constitute a Bromo 2 domain. Disordered stretches follow at residues 590 to 655 (ANAA…ERSA) and 677 to 735 (EASA…SVPG). Residues 593–619 (AHHHGHGHGHGHGHGHGHGHGHGHGHG) show a composition bias toward basic residues. The segment covering 636 to 649 (SSEDSSDTENESNS) has biased composition (acidic residues). Residues 681-694 (KKKAKKKLKEKKKS) show a composition bias toward basic residues. Positions 711 to 735 (TGGGANAGGAGGPGSGGHGSVSVPG) are enriched in gly residues. 3 helical membrane-spanning segments follow: residues 750-770 (LNALLGGSLVGHGGAAVAGGV), 790-810 (MAGGGAAAGAGFGAGVTAAGA), and 816-830 (AGTLAGALAAGAAAG). 10 disordered regions span residues 832–858 (GGTTAGSGSSKGAKSKGGRGAKGSGAG), 891–956 (AGAA…SYDE), 1016–1139 (CLRK…GGNL), 1217–1260 (AVSA…ATVA), 1384–1416 (QPAGPQQQQQQQQQQPFGHQQQQQQQQQQQQQQ), 1502–1530 (MQQMQLQQQHHQQQQQQTHQQQQQHQQQH), 1580–1616 (IESMMPSPPDKQQLQQHQKVLPPQQSPSDMKLHPNAA), 1645–1728 (WSSL…VAQA), 1745–1918 (AAAA…SGAI), and 1957–2023 (MESG…GQID). Residues 874–894 (GAAGAAAGAGSVGGVGGAGAA) traverse the membrane as a helical segment. Residues 910-927 (GAGGGVGGANASAGGAGA) are compositionally biased toward gly residues. An NET domain is found at 942–1024 (DSEEEDTAKP…SCLRKKTHKK (83 aa)). A Phosphoserine modification is found at Ser943. Basic residues predominate over residues 1017 to 1027 (LRKKTHKKPSG). Positions 1028-1046 (KSKDEQMAEKKQELEKRLQ) are enriched in basic and acidic residues. Low complexity predominate over residues 1079-1100 (SSSSSSSDSSSSSSSDSSSSDS). 2 stretches are compositionally biased toward polar residues: residues 1121-1131 (SNGSNVNNPSI) and 1222-1232 (TGQQHNKNGPN). A compositionally biased stretch (low complexity) spans 1645–1665 (WSSLASANSPQSHTSSSSSSS). Ser1653 carries the phosphoserine modification. The span at 1680 to 1708 (KAKERDRLKLLEAAEKEKKNQKEAAEKEQ) shows a compositional bias: basic and acidic residues. Low complexity-rich tracts occupy residues 1716-1728 (SSSSLTSAAVAQA) and 1745-1760 (AAAAALASSASNPSGG). The helical transmembrane segment at 1731-1751 (IAAATAAAAVTLGAAAAAALA) threads the bilayer. The span at 1776–1791 (GDRDRDRDRERERERS) shows a compositional bias: basic and acidic residues. The span at 1800–1813 (NGNNSSNSANSNGP) shows a compositional bias: low complexity. Gly residues-rich tracts occupy residues 1814-1828 (GSAGSGGSGGGGGSG) and 1835-1856 (PNSGGGGTANSNSGGGGGGGGP). Low complexity predominate over residues 1857-1884 (ALLNAGSNSNSGVGSGGAASSNSNSSVG). The span at 1885–1915 (GIVGSGGPGSNSQGSSGGGGGGPASGGGMGS) shows a compositional bias: gly residues. Residues 1939–1959 (VAAAVAAQAILAASPLGAMES) form a helical membrane-spanning segment. Residues Ser1980 and Ser1988 each carry the phosphoserine modification. Positions 1986–1997 (QSSPAQQSPQDR) are enriched in low complexity. Basic and acidic residues predominate over residues 1998–2017 (AAAKRAEQRRAEQERRRREA).

The protein localises to the membrane. Required maternally for proper expression of other homeotic genes involved in pattern formation, such as Ubx. In Drosophila melanogaster (Fruit fly), this protein is Homeotic protein female sterile (fs(1)h).